The primary structure comprises 275 residues: Probable ribosomal RNA small subunit methyltransferase A (275 aa).

S-adenosyl-L-methionine is bound by residues L13, G38, E59, D84, and N101.

Belongs to the class I-like SAM-binding methyltransferase superfamily. rRNA adenine N(6)-methyltransferase family. RsmA subfamily.

It is found in the cytoplasm. Functionally, specifically dimethylates two adjacent adenosines in the loop of a conserved hairpin near the 3'-end of 16S rRNA in the 30S particle. May play a critical role in biogenesis of 30S subunits. The chain is Probable ribosomal RNA small subunit methyltransferase A from Methanocaldococcus jannaschii (strain ATCC 43067 / DSM 2661 / JAL-1 / JCM 10045 / NBRC 100440) (Methanococcus jannaschii).